Here is a 129-residue protein sequence, read N- to C-terminus: Small ribosomal subunit protein uS9 (129 aa).

Belongs to the universal ribosomal protein uS9 family.

This Helicobacter hepaticus (strain ATCC 51449 / 3B1) protein is Small ribosomal subunit protein uS9.